Consider the following 418-residue polypeptide: Gamma-glutamyl phosphate reductase (418 aa).

This sequence belongs to the gamma-glutamyl phosphate reductase family.

It localises to the cytoplasm. It carries out the reaction L-glutamate 5-semialdehyde + phosphate + NADP(+) = L-glutamyl 5-phosphate + NADPH + H(+). It participates in amino-acid biosynthesis; L-proline biosynthesis; L-glutamate 5-semialdehyde from L-glutamate: step 2/2. In terms of biological role, catalyzes the NADPH-dependent reduction of L-glutamate 5-phosphate into L-glutamate 5-semialdehyde and phosphate. The product spontaneously undergoes cyclization to form 1-pyrroline-5-carboxylate. This Clostridium acetobutylicum (strain ATCC 824 / DSM 792 / JCM 1419 / IAM 19013 / LMG 5710 / NBRC 13948 / NRRL B-527 / VKM B-1787 / 2291 / W) protein is Gamma-glutamyl phosphate reductase.